The following is a 455-amino-acid chain: GTPase Der (455 aa).

EngA-type G domains are found at residues proline 4–aspartate 169 and isoleucine 178–arginine 353. GTP-binding positions include glycine 10–serine 17, aspartate 57–leucine 61, asparagine 120–glutamate 123, glycine 184–serine 191, aspartate 231–isoleucine 235, and asparagine 296–aspartate 299. The 86-residue stretch at arginine 354–glutamine 439 folds into the KH-like domain.

Belongs to the TRAFAC class TrmE-Era-EngA-EngB-Septin-like GTPase superfamily. EngA (Der) GTPase family. As to quaternary structure, associates with the 50S ribosomal subunit.

Functionally, GTPase that plays an essential role in the late steps of ribosome biogenesis. The polypeptide is GTPase Der (Parasynechococcus marenigrum (strain WH8102)).